We begin with the raw amino-acid sequence, 425 residues long: 5-hydroxytryptamine receptor 7 (425 aa).

The Extracellular portion of the chain corresponds to 1 to 72; the sequence is MLIQVQPSHL…LLYGDTEKIV (72 aa). N-linked (GlcNAc...) asparagine glycans are attached at residues N14, N41, and N51. Residues 73 to 97 traverse the membrane as a helical segment; the sequence is IGVVLSIITLFTIAGNALVIISVCI. Residues 98–107 are Cytoplasmic-facing; it reads VKKLRQPSNY. The helical transmembrane segment at 108–129 threads the bilayer; the sequence is LVVSLAAADLSVAVAVMPFVII. The Extracellular segment spans residues 130 to 141; it reads TDLVGGEWLFGK. A helical membrane pass occupies residues 142–167; it reads VFCNVFIAMDVMCCTASIMTLCVISV. Cysteines 144 and 220 form a disulfide. D151 contributes to the serotonin binding site. Over 168-187 the chain is Cytoplasmic; sequence DRYLGITRPLTYPARQNGKL. The helical transmembrane segment at 188–208 threads the bilayer; that stretch reads MAKMVFIVWLLSASITLPPLF. At 209 to 226 the chain is on the extracellular side; the sequence is GWAKNVNVERVCLISQDF. Residues 227 to 249 form a helical membrane-spanning segment; the sequence is GYTVYSTAVAFYIPMTVMLVMYQ. The Cytoplasmic segment spans residues 250–322; that stretch reads RIFVAAKISA…SIFKREQKAA (73 aa). Residues 323-348 form a helical membrane-spanning segment; it reads RTLGIIVGAFTFCWLPFFLLSTARPF. Residues 349–359 lie on the Extracellular side of the membrane; the sequence is ICGIMCSCMPL. A helical transmembrane segment spans residues 360 to 383; that stretch reads RLERTLLWLGYTNSLINPLIYAFF. The Cytoplasmic portion of the chain corresponds to 384–425; that stretch reads NRDLRTTFWNLLRCKYTNINRRLSAASMHEALKVTERHEGIL. C397 carries S-palmitoyl cysteine lipidation.

It belongs to the G-protein coupled receptor 1 family.

It localises to the cell membrane. In terms of biological role, G-protein coupled receptor for 5-hydroxytryptamine (serotonin), a biogenic hormone that functions as a neurotransmitter, a hormone and a mitogen. Ligand binding causes a conformation change that triggers signaling via guanine nucleotide-binding proteins (G proteins) and modulates the activity of downstream effectors. HTR7 is coupled to G(s) G alpha proteins and mediates activation of adenylate cyclase activity. The polypeptide is 5-hydroxytryptamine receptor 7 (htr7) (Xenopus laevis (African clawed frog)).